The primary structure comprises 192 residues: UPF0301 protein Bcep1808_0798 (192 aa).

This sequence belongs to the UPF0301 (AlgH) family.

The polypeptide is UPF0301 protein Bcep1808_0798 (Burkholderia vietnamiensis (strain G4 / LMG 22486) (Burkholderia cepacia (strain R1808))).